Here is a 333-residue protein sequence, read N- to C-terminus: Fructose-1,6-bisphosphatase class 1 (333 aa).

Mg(2+)-binding residues include E89, D112, L114, and D115. Substrate contacts are provided by residues 115–118, N208, Y241, and K271; that span reads DGSS. Mg(2+) is bound at residue E277.

Belongs to the FBPase class 1 family. As to quaternary structure, homotetramer. Requires Mg(2+) as cofactor.

The protein resides in the cytoplasm. It carries out the reaction beta-D-fructose 1,6-bisphosphate + H2O = beta-D-fructose 6-phosphate + phosphate. It participates in carbohydrate biosynthesis; gluconeogenesis. The polypeptide is Fructose-1,6-bisphosphatase class 1 (Haemophilus influenzae (strain ATCC 51907 / DSM 11121 / KW20 / Rd)).